Here is a 324-residue protein sequence, read N- to C-terminus: Glyoxylate/hydroxypyruvate reductase B (324 aa).

Catalysis depends on residues arginine 237 and glutamate 266. The active-site Proton donor is the histidine 285.

It belongs to the D-isomer specific 2-hydroxyacid dehydrogenase family. GhrB subfamily. In terms of assembly, homodimer.

It localises to the cytoplasm. It catalyses the reaction glycolate + NADP(+) = glyoxylate + NADPH + H(+). The enzyme catalyses (R)-glycerate + NAD(+) = 3-hydroxypyruvate + NADH + H(+). The catalysed reaction is (R)-glycerate + NADP(+) = 3-hydroxypyruvate + NADPH + H(+). Functionally, catalyzes the NADPH-dependent reduction of glyoxylate and hydroxypyruvate into glycolate and glycerate, respectively. The chain is Glyoxylate/hydroxypyruvate reductase B from Salmonella agona (strain SL483).